The primary structure comprises 245 residues: Glutathione S-transferase F4 (245 aa).

The GST N-terminal domain occupies Ala25–Gly106. Glutathione contacts are provided by residues Ser35–Thr36, His64–Lys65, Gln77–Val78, and Glu90–Ser91. Residues Ser114–Arg244 form the GST C-terminal domain.

This sequence belongs to the GST superfamily. Phi family.

It is found in the cytoplasm. The protein localises to the cytosol. It carries out the reaction RX + glutathione = an S-substituted glutathione + a halide anion + H(+). May be involved in the conjugation of reduced glutathione to a wide number of exogenous and endogenous hydrophobic electrophiles and have a detoxification role against certain herbicides. The chain is Glutathione S-transferase F4 (GSTF4) from Arabidopsis thaliana (Mouse-ear cress).